The chain runs to 940 residues: Isoleucine--tRNA ligase (940 aa).

The 'HIGH' region motif lies at 58 to 68 (PYANGDIHIGH). Residue glutamate 564 participates in L-isoleucyl-5'-AMP binding. The short motif at 605-609 (KMSKS) is the 'KMSKS' region element. Position 608 (lysine 608) interacts with ATP. The Zn(2+) site is built by cysteine 903, cysteine 906, cysteine 923, and cysteine 926.

The protein belongs to the class-I aminoacyl-tRNA synthetase family. IleS type 1 subfamily. Monomer. It depends on Zn(2+) as a cofactor.

It is found in the cytoplasm. The enzyme catalyses tRNA(Ile) + L-isoleucine + ATP = L-isoleucyl-tRNA(Ile) + AMP + diphosphate. Its function is as follows. Catalyzes the attachment of isoleucine to tRNA(Ile). As IleRS can inadvertently accommodate and process structurally similar amino acids such as valine, to avoid such errors it has two additional distinct tRNA(Ile)-dependent editing activities. One activity is designated as 'pretransfer' editing and involves the hydrolysis of activated Val-AMP. The other activity is designated 'posttransfer' editing and involves deacylation of mischarged Val-tRNA(Ile). The protein is Isoleucine--tRNA ligase of Shewanella halifaxensis (strain HAW-EB4).